The chain runs to 66 residues: MPKMKTHRGSAKRFKKTGSGKLKRSHAYTSHLFANKSQKQKRKLRKGAIVSAGDFKRIKQQLANIK.

Over residues 1–26 the composition is skewed to basic residues; the sequence is MPKMKTHRGSAKRFKKTGSGKLKRSH. The segment at 1–45 is disordered; that stretch reads MPKMKTHRGSAKRFKKTGSGKLKRSHAYTSHLFANKSQKQKRKLR.

It belongs to the bacterial ribosomal protein bL35 family.

In Bacillus velezensis (strain DSM 23117 / BGSC 10A6 / LMG 26770 / FZB42) (Bacillus amyloliquefaciens subsp. plantarum), this protein is Large ribosomal subunit protein bL35.